The following is a 250-amino-acid chain: Triosephosphate isomerase (250 aa).

9–11 is a substrate binding site; that stretch reads NWK. His96 functions as the Electrophile in the catalytic mechanism. The Proton acceptor role is filled by Glu166. Substrate is bound by residues Gly172, Ser212, and 233–234; that span reads GG.

It belongs to the triosephosphate isomerase family. In terms of assembly, homodimer.

It is found in the cytoplasm. The catalysed reaction is D-glyceraldehyde 3-phosphate = dihydroxyacetone phosphate. It participates in carbohydrate biosynthesis; gluconeogenesis. Its pathway is carbohydrate degradation; glycolysis; D-glyceraldehyde 3-phosphate from glycerone phosphate: step 1/1. Involved in the gluconeogenesis. Catalyzes stereospecifically the conversion of dihydroxyacetone phosphate (DHAP) to D-glyceraldehyde-3-phosphate (G3P). The protein is Triosephosphate isomerase of Chlorobium luteolum (strain DSM 273 / BCRC 81028 / 2530) (Pelodictyon luteolum).